The sequence spans 485 residues: MTITPQNLIALLPLLIVGLTVVVVMLSIAWRRNHFLNATLSVIGLNAALVSLWFVGQAGAMDVTPLMRVDGFAMLYTGLVLLASLATCTFAYPWLEGYNDNKDEFYLLVLIAALGGILLANANHLASLFLGIELISLPLFGLVGYAFRQKRSLEASIKYTILSAAASSFLLFGMALVYAQSGDLSFVALGKNLGDGMLNEPLLLAGFGLMIVGLGFKLSLVPFHLWTPDVYQGAPAPVSTFLATASKIAIFGVVMRLFLYAPMGDSEAIRVVLAIIAFASIIFGNLMALSQTNIKRLLGYSSISHLGYLLVALIALQTGEMSMEAVGVYLAGYLFSSLGAFGVVSLMSSPYRGPDADSLYSYRGLFWHRPILAAVMTVMMLSLAGIPMTLGFIGKFYVLAVGVQAHLWWLVGAVVVGSASGLYYYLRVAVSLYLHAPEQPGRDAPSNWQYSAGGIVVLISALLVLVLGVWPQPLISIVRLAMPLM.

The next 14 helical transmembrane spans lie at 8–28 (LIAL…MLSI), 35–55 (FLNA…LWFV), 71–91 (GFAM…CTFA), 105–125 (FYLL…ANHL), 127–147 (SLFL…GYAF), 159–179 (YTIL…LVYA), 203–223 (LLAG…LVPF), 235–255 (PAPV…GVVM), 271–291 (VVLA…ALSQ), 297–317 (LLGY…IALQ), 326–346 (VGVY…VVSL), 373–393 (AAVM…LGFI), 408–430 (WWLV…RVAV), and 455–475 (IVVL…QPLI).

It belongs to the complex I subunit 2 family. In terms of assembly, NDH-1 is composed of 13 different subunits. Subunits NuoA, H, J, K, L, M, N constitute the membrane sector of the complex.

The protein localises to the cell inner membrane. It catalyses the reaction a quinone + NADH + 5 H(+)(in) = a quinol + NAD(+) + 4 H(+)(out). Its function is as follows. NDH-1 shuttles electrons from NADH, via FMN and iron-sulfur (Fe-S) centers, to quinones in the respiratory chain. The immediate electron acceptor for the enzyme in this species is believed to be ubiquinone. Couples the redox reaction to proton translocation (for every two electrons transferred, four hydrogen ions are translocated across the cytoplasmic membrane), and thus conserves the redox energy in a proton gradient. This chain is NADH-quinone oxidoreductase subunit N, found in Shigella sonnei (strain Ss046).